We begin with the raw amino-acid sequence, 369 residues long: Glutamate 5-kinase (369 aa).

K9 provides a ligand contact to ATP. Substrate contacts are provided by S49, D136, and N148. ATP is bound by residues 168 to 169 (TD) and 210 to 216 (TGGMLTK). Positions 275 to 355 (QGEIYVDQGA…KGVVIHRDDW (81 aa)) constitute a PUA domain.

It belongs to the glutamate 5-kinase family.

It localises to the cytoplasm. It catalyses the reaction L-glutamate + ATP = L-glutamyl 5-phosphate + ADP. Its pathway is amino-acid biosynthesis; L-proline biosynthesis; L-glutamate 5-semialdehyde from L-glutamate: step 1/2. Its function is as follows. Catalyzes the transfer of a phosphate group to glutamate to form L-glutamate 5-phosphate. This Streptococcus gordonii (strain Challis / ATCC 35105 / BCRC 15272 / CH1 / DL1 / V288) protein is Glutamate 5-kinase.